A 331-amino-acid polypeptide reads, in one-letter code: MSEMLFFVITTIVKAVVILAVMASLAGLATYAERKVLAYMQRRVGPDMVGPAGVLQIVADMIKLFTKEDIVPANANKFIFLIAPLISAIAAFAALAPVPFLPEFEVFGHTIRPILADINVGVLYIAGVAAVCVFSPLAAGLASYNKFALISAARAVVALLSFEVVAGMALLSVVMVTSSLSLVDINNYQKGIFNWLIFKQPLAFVLFVMASFVECNRTPFCLTENETEIVAGYGTEYSGMRWAMFFIGEYTNMIAASIIITLLFLGGFNEFLFIPGALMIILKSSLVFFFFLWTRASWPHLRVDQLSMLCWKILLPLGILNVVITGFALLI.

The next 9 helical transmembrane spans lie at 5-25, 45-65, 78-98, 122-142, 156-176, 192-212, 245-265, 271-291, and 311-331; these read LFFV…MASL, GPDM…IKLF, FIFL…LAPV, VLYI…AGLA, VVAL…VVMV, IFNW…MASF, FFIG…LLFL, FLFI…FFFF, and WKIL…ALLI.

Belongs to the complex I subunit 1 family. NDH-1 is composed of 14 different subunits. Subunits NuoA, H, J, K, L, M, N constitute the membrane sector of the complex.

It localises to the cell inner membrane. The enzyme catalyses a quinone + NADH + 5 H(+)(in) = a quinol + NAD(+) + 4 H(+)(out). In terms of biological role, NDH-1 shuttles electrons from NADH, via FMN and iron-sulfur (Fe-S) centers, to quinones in the respiratory chain. The immediate electron acceptor for the enzyme in this species is believed to be ubiquinone. Couples the redox reaction to proton translocation (for every two electrons transferred, four hydrogen ions are translocated across the cytoplasmic membrane), and thus conserves the redox energy in a proton gradient. This subunit may bind ubiquinone. The sequence is that of NADH-quinone oxidoreductase subunit H from Campylobacter concisus (strain 13826).